We begin with the raw amino-acid sequence, 596 residues long: Dihydroxy-acid dehydratase pbrD, mitochondrial (596 aa).

The N-terminal 18 residues, 1-18 (MATSSIRSRALGLSRRAR), are a transit peptide targeting the mitochondrion. Cysteine 84 lines the [2Fe-2S] cluster pocket. Residue aspartate 116 participates in Mg(2+) binding. Cysteine 157 is a binding site for [2Fe-2S] cluster. Residue aspartate 158 coordinates Mg(2+). Position 230 (cysteine 230) interacts with [2Fe-2S] cluster. Glutamate 483 contacts Mg(2+). The Proton acceptor role is filled by serine 509.

The protein belongs to the IlvD/Edd family. Requires [2Fe-2S] cluster as cofactor. Mg(2+) is required as a cofactor.

It is found in the mitochondrion. It catalyses the reaction (2R)-2,3-dihydroxy-3-methylbutanoate = 3-methyl-2-oxobutanoate + H2O. The catalysed reaction is (2R,3R)-2,3-dihydroxy-3-methylpentanoate = (S)-3-methyl-2-oxopentanoate + H2O. Its pathway is amino-acid biosynthesis; L-isoleucine biosynthesis; L-isoleucine from 2-oxobutanoate: step 3/4. It participates in amino-acid biosynthesis; L-valine biosynthesis; L-valine from pyruvate: step 3/4. With respect to regulation, DHAD activity is not inhibited by the dihydroxyacid dehydratase inhibitor aspterric acid (AA). Functionally, dihydroxyacid dehydratase; part of the gene cluster that mediates the biosynthesis of the sesquiterpenoid aspterric acid (AA), an inhibitor of dihydroxy-acid dehydratase (DHAD) effective as an herbicide. Performs the third step in the common pathway leading to biosynthesis of branched-chain amino acids. Catalyzes the dehydration of (2R,3R)-2,3-dihydroxy-3-methylpentanoate (2,3-dihydroxy-3-methylvalerate) into 2-oxo-3-methylpentanoate (2-oxo-3-methylvalerate) and of (2R)-2,3-dihydroxy-3-methylbutanoate (2,3-dihydroxyisovalerate) into 2-oxo-3-methylbutanoate (2-oxoisovalerate), the penultimate precursor to L-isoleucine and L-valine, respectively. PbrD confers self-resistance in the presence of the dihydroxyacid dehydratase inhibitor aspterric acid (AA) produced by the ast cluster. The sequence is that of Dihydroxy-acid dehydratase pbrD, mitochondrial from Penicillium brasilianum.